We begin with the raw amino-acid sequence, 828 residues long: BEN domain-containing protein 3 (828 aa).

Residue Lys-20 forms a Glycyl lysine isopeptide (Lys-Gly) (interchain with G-Cter in SUMO); alternate linkage. Lys-20 participates in a covalent cross-link: Glycyl lysine isopeptide (Lys-Gly) (interchain with G-Cter in SUMO1); alternate. Lys-20 participates in a covalent cross-link: Glycyl lysine isopeptide (Lys-Gly) (interchain with G-Cter in SUMO2); alternate. Residues Lys-41, Lys-56, Lys-58, Lys-73, Lys-128, Lys-129, Lys-137, Lys-142, and Lys-158 each participate in a glycyl lysine isopeptide (Lys-Gly) (interchain with G-Cter in SUMO2) cross-link. Positions 56-58 (KRK) match the Nuclear localization signal motif. At Ser-164 the chain carries Phosphoserine. The tract at residues 164-184 (SPSSLRLLNEPQKRDCGSTGA) is disordered. Lys-176 is covalently cross-linked (Glycyl lysine isopeptide (Lys-Gly) (interchain with G-Cter in SUMO2)). In terms of domain architecture, BEN 1 spans 242–343 (PPPEYQLTAA…DFFSRFWAQR (102 aa)). Ser-379 carries the post-translational modification Phosphoserine. Positions 387 to 487 (ASDHVVDTQD…DELEGLGLDA (101 aa)) constitute a BEN 2 domain. Lys-427 participates in a covalent cross-link: Glycyl lysine isopeptide (Lys-Gly) (interchain with G-Cter in SUMO2). The disordered stretch occupies residues 483–504 (LGLDAGSEGDPPRDDCYDSSSL). Residue Ser-489 is modified to Phosphoserine. Lys-512 participates in a covalent cross-link: Glycyl lysine isopeptide (Lys-Gly) (interchain with G-Cter in SUMO); alternate. A Glycyl lysine isopeptide (Lys-Gly) (interchain with G-Cter in SUMO2); alternate cross-link involves residue Lys-512. A Glycyl lysine isopeptide (Lys-Gly) (interchain with G-Cter in SUMO2) cross-link involves residue Lys-528. Residues 548–650 (VPGADCLLSK…ERCRRRDTEQ (103 aa)) form the BEN 3 domain. Residue Lys-700 forms a Glycyl lysine isopeptide (Lys-Gly) (interchain with G-Cter in SUMO2) linkage. The 102-residue stretch at 715–816 (VPSPYLLSDK…ERCRRPNRKK (102 aa)) folds into the BEN 4 domain.

As to quaternary structure, homooligomer, probably a homooctamer. Interacts with HDAC2 and HDAC3, but not HDAC1. Interacts with SALL4. Interacts with SMARCA5/SNF2H, BAZ2A/TIP5 and USP21. Interacts with the nucleosome remodeling and histone deacetylase (NuRD) repressor complex. Interacts (via BEN domains 1 and 3) with ERCC6L (via N-terminal TPR repeat); the interaction is direct. Post-translationally, sumoylated at Lys-20 by SUMO1 and at Lys-512 by SUMO1, SUMO2 and SUMO3. Sumoylation probably occurs sequentially, with that of Lys-20 preceding that of Lys-512. It does not alter association with heterochromatin, but is required for the repression of transcription. As to expression, expressed at least in heart, kidney, liver, ovary and spleen, with highest levels in spleen and lowest in heart. Expressed on the surface of T-cells.

The protein localises to the nucleus. It localises to the nucleolus. Functionally, transcriptional repressor which associates with the NoRC (nucleolar remodeling complex) complex and plays a key role in repressing rDNA transcription. The sumoylated form modulates the stability of the NoRC complex component BAZ2A/TIP5 by controlling its USP21-mediated deubiquitination. Binds to unmethylated major satellite DNA and is involved in the recruitment of the Polycomb repressive complex 2 (PRC2) to major satellites. Stimulates the ERCC6L translocase and ATPase activities. In Homo sapiens (Human), this protein is BEN domain-containing protein 3 (BEND3).